We begin with the raw amino-acid sequence, 121 residues long: Flagellar protein FliT (121 aa).

A required for homodimerization region spans residues 1-50 (MNNAPHLYFAWQQLVEKSQLMLRLATEEQWDELIASEMAYVNAVQEIAHL). The interval 60-98 (MQEQLRPMLRLILDNESKVKQLLQIRMDELAKLVGQSSV) is fliD binding.

The protein belongs to the FliT family. In terms of assembly, homodimer. Interacts with FliD and FlhC.

The protein localises to the cytoplasm. It localises to the cytosol. Its function is as follows. Dual-function protein that regulates the transcription of class 2 flagellar operons and that also acts as an export chaperone for the filament-capping protein FliD. As a transcriptional regulator, acts as an anti-FlhDC factor; it directly binds FlhC, thus inhibiting the binding of the FlhC/FlhD complex to class 2 promoters, resulting in decreased expression of class 2 flagellar operons. As a chaperone, effects FliD transition to the membrane by preventing its premature polymerization, and by directing it to the export apparatus. This is Flagellar protein FliT from Escherichia coli O9:H4 (strain HS).